The sequence spans 502 residues: Lysine--tRNA ligase (502 aa).

Positions 403 and 410 each coordinate Mg(2+).

Belongs to the class-II aminoacyl-tRNA synthetase family. Homodimer. Requires Mg(2+) as cofactor.

It is found in the cytoplasm. It catalyses the reaction tRNA(Lys) + L-lysine + ATP = L-lysyl-tRNA(Lys) + AMP + diphosphate. The polypeptide is Lysine--tRNA ligase (Synechococcus sp. (strain CC9605)).